A 158-amino-acid chain; its full sequence is Cyclic pyranopterin monophosphate synthase (158 aa).

Substrate-binding positions include L75 to H77 and M113 to E114. D128 is an active-site residue.

The protein belongs to the MoaC family. Homohexamer; trimer of dimers.

It catalyses the reaction (8S)-3',8-cyclo-7,8-dihydroguanosine 5'-triphosphate = cyclic pyranopterin phosphate + diphosphate. It participates in cofactor biosynthesis; molybdopterin biosynthesis. Catalyzes the conversion of (8S)-3',8-cyclo-7,8-dihydroguanosine 5'-triphosphate to cyclic pyranopterin monophosphate (cPMP). This Paraburkholderia xenovorans (strain LB400) protein is Cyclic pyranopterin monophosphate synthase.